A 431-amino-acid polypeptide reads, in one-letter code: MDKLLINGGISLNGEIRISGAKNAALPILAATLLASEPVKICNIPHLHDITTTMELLGRMGAQLMVDEHLNIEVDTRNLKEFYAPYELVKTMRASILVLGPLLARYGRADVSLPGGCAIGSRPVNLHIHGLQAMGATITVEEGYICARSQGRLRGTRLFMDRVSVTGTENLMMAATLAEGTTFIENAAREPEVVDLAHCLNQMGARISGMGSDTLVIEGVDSLGGASHTVLPDRIETGTYLVAGALTGGRVKLKNTSPGSLEAVLLKLEEAGAEINTGKDWIVLDMKGRRPRAVDIRTAPYPAFPTDMQAQFTTLNIVAEGSGTITETVFENRFMHVQELQRMGAVIRLEGNTAFTNGVETLTGAPVMATDLRASASLVLAGLVAKGVTAVDRIYHVDRGYECIEEKLQQLGAKIRRVSSYTPGKIYAAYG.

Residue 22–23 coordinates phosphoenolpyruvate; that stretch reads KN. Arg-93 is a UDP-N-acetyl-alpha-D-glucosamine binding site. Cys-117 acts as the Proton donor in catalysis. Cys-117 bears the 2-(S-cysteinyl)pyruvic acid O-phosphothioketal mark. Residues Asp-307 and Val-329 each coordinate UDP-N-acetyl-alpha-D-glucosamine.

It belongs to the EPSP synthase family. MurA subfamily.

It is found in the cytoplasm. It catalyses the reaction phosphoenolpyruvate + UDP-N-acetyl-alpha-D-glucosamine = UDP-N-acetyl-3-O-(1-carboxyvinyl)-alpha-D-glucosamine + phosphate. It functions in the pathway cell wall biogenesis; peptidoglycan biosynthesis. Functionally, cell wall formation. Adds enolpyruvyl to UDP-N-acetylglucosamine. The polypeptide is UDP-N-acetylglucosamine 1-carboxyvinyltransferase (Nitrosococcus oceani (strain ATCC 19707 / BCRC 17464 / JCM 30415 / NCIMB 11848 / C-107)).